The following is a 211-amino-acid chain: GATA transcription factor 19 (211 aa).

The GATA-type zinc finger occupies 77 to 102; it reads CANCDTTSTPLWRNGPRGPKSLCNAC. Residues 111–131 are disordered; the sequence is RRASTARNSTSGGGSTAAGVP.

This sequence belongs to the type IV zinc-finger family. Class B subfamily. Forms heterodimers with GATA18.

It is found in the nucleus. Its function is as follows. Transcriptional regulator that specifically binds 5'-GATA-3' or 5'-GAT-3' motifs within gene promoters. Regulates both flower and shoot apical meristem (SAM) development, especially for establishing organ boundaries in shoots and flowers, probably by controlling the number and position of WUS-expressing cells. This chain is GATA transcription factor 19, found in Arabidopsis thaliana (Mouse-ear cress).